The sequence spans 158 residues: Extracellular giant hemoglobin major globin subunit A2 (158 aa).

A signal peptide spans 1–16; sequence MKSLIVFACLVAYAAA. Residues 17–158 enclose the Globin domain; it reads DCTSLNRLLV…MNQIVSGISG (142 aa). Residues C18 and C148 are joined by a disulfide bond. C89 lines the hydrogen sulfide pocket. Residue H110 participates in heme b binding.

This sequence belongs to the globin family. The 400 kDa hemoglobin consists of a spherical 24-mer arranged as a double layer of dome-shaped dodecamers. Each dodecamer is composed of the 3-fold trimer of the tetramer A1-A2-B1-B2 having one intra-tetramer (A1-B2) disulfide bond and one inter-tetramer (B1-B2) disulfide bond per tetramer.

It localises to the secreted. Functionally, the extracellular giant hemoglobin is able to bind and transport oxygen and hydrosulfide simultaneously and reversibly at two different sites. The sequence is that of Extracellular giant hemoglobin major globin subunit A2 (ghbA2) from Oligobrachia mashikoi (Beard worm).